A 440-amino-acid chain; its full sequence is Enolase (440 aa).

Residues His159 and Glu168 each contribute to the substrate site. Catalysis depends on Glu211, which acts as the Proton donor. 3 residues coordinate Mg(2+): Asp245, Glu296, and Asp321. Substrate-binding residues include Glu296 and Asp321. Residue Lys346 is the Proton acceptor of the active site. Substrate-binding positions include 373-376 (SHRS) and Lys397.

The protein belongs to the enolase family. In terms of assembly, homodimer. It depends on Mg(2+) as a cofactor.

Its subcellular location is the cytoplasm. It catalyses the reaction (2R)-2-phosphoglycerate = phosphoenolpyruvate + H2O. It participates in carbohydrate degradation; glycolysis; pyruvate from D-glyceraldehyde 3-phosphate: step 4/5. This chain is Enolase (eno-1), found in Tuber borchii (White truffle).